A 377-amino-acid polypeptide reads, in one-letter code: MYIEKISLLNFKNYPELELSFSAGINLFAGLNGSGKTNLLDSIYCLCLTKSFLSTTDQQTITTGQGYFSALGWFQENAKEFKIQYDFDGKKKSFTVDKKPYAKISEHIGRFPAIVLTPHDTDLIRNSSEDRRRFFDTLFSQADHVYLDALIRYNHFIKQRNALLKQAADGMLVDRILMDAYDHNLLQSGKIIAQKRDEYLKRLLPIFQEYYSLLSPDHEATDIEYETNVLSADFEQVFKDSYSKDLILQRTNKGVHKDDFKFLINNEPIKHYGSQGQQKTFVIALKLAQYELLKACTGHNPILLMDDIFDKLDDLRIEKLIHLVQKYITGQLFISDARPDRSSIFFQSNTKDFRMFIIDRGKVEQSPPSQSELNTDV.

30 to 37 (GLNGSGKT) contacts ATP.

Belongs to the RecF family.

The protein localises to the cytoplasm. The RecF protein is involved in DNA metabolism; it is required for DNA replication and normal SOS inducibility. RecF binds preferentially to single-stranded, linear DNA. It also seems to bind ATP. The protein is DNA replication and repair protein RecF of Cytophaga hutchinsonii (strain ATCC 33406 / DSM 1761 / CIP 103989 / NBRC 15051 / NCIMB 9469 / D465).